Consider the following 228-residue polypeptide: LexA repressor (228 aa).

Residues 26-46 (FDEMKEALDLRSKSGIHRLIT) constitute a DNA-binding region (H-T-H motif). Residues serine 149 and lysine 187 each act as for autocatalytic cleavage activity in the active site.

Belongs to the peptidase S24 family. Homodimer.

The enzyme catalyses Hydrolysis of Ala-|-Gly bond in repressor LexA.. In terms of biological role, represses a number of genes involved in the response to DNA damage (SOS response), including recA and lexA. In the presence of single-stranded DNA, RecA interacts with LexA causing an autocatalytic cleavage which disrupts the DNA-binding part of LexA, leading to derepression of the SOS regulon and eventually DNA repair. In Jannaschia sp. (strain CCS1), this protein is LexA repressor.